The chain runs to 272 residues: 3-methyl-2-oxobutanoate hydroxymethyltransferase (272 aa).

Mg(2+) contacts are provided by Asp-43 and Asp-82. Residues 43-44 (DS), Asp-82, and Lys-112 each bind 3-methyl-2-oxobutanoate. Glu-114 provides a ligand contact to Mg(2+). Glu-179 serves as the catalytic Proton acceptor.

It belongs to the PanB family. In terms of assembly, homodecamer; pentamer of dimers. It depends on Mg(2+) as a cofactor.

It is found in the cytoplasm. It carries out the reaction 3-methyl-2-oxobutanoate + (6R)-5,10-methylene-5,6,7,8-tetrahydrofolate + H2O = 2-dehydropantoate + (6S)-5,6,7,8-tetrahydrofolate. It participates in cofactor biosynthesis; (R)-pantothenate biosynthesis; (R)-pantoate from 3-methyl-2-oxobutanoate: step 1/2. In terms of biological role, catalyzes the reversible reaction in which hydroxymethyl group from 5,10-methylenetetrahydrofolate is transferred onto alpha-ketoisovalerate to form ketopantoate. This is 3-methyl-2-oxobutanoate hydroxymethyltransferase from Staphylococcus aureus (strain JH1).